The following is a 270-amino-acid chain: Probable inner membrane protein BTH_II0599 (270 aa).

6 helical membrane passes run 24–44, 45–65, 98–118, 150–170, 198–218, and 226–246; these read RNPL…MLVS, LVPV…AVGF, LLTL…CSAL, ALIA…APVL, VYGL…AALM, and YALM…YCSF.

It localises to the cell inner membrane. In terms of biological role, (Microbial infection) Probably transports the toxic C-terminal region of CdiA-2 from B.pseudomallei strain 1026b across the inner membrane to the cytoplasm, where CdiA has a toxic effect. Expression in E.coli makes the bacteria sensitive to the tRNase domain of B.pseudomallei strain 1026b CdiA-2. This is Probable inner membrane protein BTH_II0599 from Burkholderia thailandensis (strain ATCC 700388 / DSM 13276 / CCUG 48851 / CIP 106301 / E264).